The following is a 484-amino-acid chain: Adenylosuccinate synthetase, chloroplastic (484 aa).

Residues 1–44 constitute a chloroplast transit peptide; that stretch reads MSLSTLSHPAAAAAGSGKSLFPAGPAAQSVHFPKARLPVPAAVS. GTP-binding positions include 71–77 and 99–101; these read GDEGKGK and GHT. The active-site Proton acceptor is D72. Residues D72 and G99 each contribute to the Mg(2+) site. IMP-binding positions include 72–75, 97–100, T189, R203, Q283, T298, and R362; these read DEGK and NAGH. Residue H100 is the Proton donor of the active site. Substrate is bound at residue 358 to 364; sequence TTTGRPR. GTP contacts are provided by residues R364, 390–392, and 473–475; these read KLD and GVG.

It belongs to the adenylosuccinate synthetase family. Homodimer. Requires Mg(2+) as cofactor.

Its subcellular location is the plastid. It localises to the chloroplast. The catalysed reaction is IMP + L-aspartate + GTP = N(6)-(1,2-dicarboxyethyl)-AMP + GDP + phosphate + 2 H(+). Its pathway is purine metabolism; AMP biosynthesis via de novo pathway; AMP from IMP: step 1/2. Plays an important role in the de novo pathway and in the salvage pathway of purine nucleotide biosynthesis. Catalyzes the first committed step in the biosynthesis of AMP from IMP. The polypeptide is Adenylosuccinate synthetase, chloroplastic (Zea mays (Maize)).